The chain runs to 359 residues: DNA integrity scanning protein DisA (359 aa).

The 139-residue stretch at 7–145 (DDIFRATLAA…AGRRYVLDGA (139 aa)) folds into the DAC domain. ATP-binding positions include Gly74, Leu92, and 105-109 (TRHRT).

It belongs to the DisA family. As to quaternary structure, homooctamer. The cofactor is Mg(2+).

The enzyme catalyses 2 ATP = 3',3'-c-di-AMP + 2 diphosphate. In terms of biological role, participates in a DNA-damage check-point that is active prior to asymmetric division when DNA is damaged. DisA forms globular foci that rapidly scan along the chromosomes during sporulation, searching for lesions. When a lesion is present, DisA pauses at the lesion site. This triggers a cellular response that culminates in a temporary block in sporulation initiation. Also has diadenylate cyclase activity, catalyzing the condensation of 2 ATP molecules into cyclic di-AMP (c-di-AMP). c-di-AMP acts as a signaling molecule that couples DNA integrity with progression of sporulation. The rise in c-di-AMP level generated by DisA while scanning the chromosome, operates as a positive signal that advances sporulation; upon encountering a lesion, the DisA focus arrests at the damaged site and halts c-di-AMP synthesis. The chain is DNA integrity scanning protein DisA from Parafrankia sp. (strain EAN1pec).